Reading from the N-terminus, the 434-residue chain is F-box only protein 15 (434 aa).

One can recognise an F-box domain in the interval methionine 1–isoleucine 41.

Directly interacts with SKP1 and CUL1.

In terms of biological role, substrate-recognition component of the SCF (SKP1-CUL1-F-box protein)-type E3 ubiquitin ligase complex. This chain is F-box only protein 15 (FBXO15), found in Macaca fascicularis (Crab-eating macaque).